The sequence spans 870 residues: Leucine--tRNA ligase (870 aa).

The 'HIGH' region signature appears at 36–46; it reads PYPSGKIHLGH. Positions 602–606 match the 'KMSKS' region motif; it reads KMSKS. Lys-605 is an ATP binding site.

The protein belongs to the class-I aminoacyl-tRNA synthetase family.

The protein resides in the cytoplasm. It catalyses the reaction tRNA(Leu) + L-leucine + ATP = L-leucyl-tRNA(Leu) + AMP + diphosphate. The polypeptide is Leucine--tRNA ligase (Rickettsia akari (strain Hartford)).